Consider the following 172-residue polypeptide: MFIKKIKAKANNNEINVIIEIPMNSGPIKYEFDKESGALFVDRFMQTTMSYPCNYGFIPDTLSNDGDPVDVLVVAHHPVVPGSVIKCRAIGVLMMEDESGLDEKIIAVPTSKLDITFDHIKELDDLCEMLKKRIVHFFEHYKDLEKGKWVKVTGWGDKVKAETLIKEGIDRN.

Substrate-binding residues include Lys-29, Arg-43, and Tyr-55. The Mg(2+) site is built by Asp-65, Asp-70, and Asp-102. Tyr-141 lines the substrate pocket.

Belongs to the PPase family. In terms of assembly, homohexamer. Requires Mg(2+) as cofactor.

Its subcellular location is the cytoplasm. The enzyme catalyses diphosphate + H2O = 2 phosphate + H(+). Catalyzes the hydrolysis of inorganic pyrophosphate (PPi) forming two phosphate ions. This chain is Inorganic pyrophosphatase, found in Rickettsia prowazekii (strain Madrid E).